A 451-amino-acid chain; its full sequence is Protein-tyrosine kinase 6 (451 aa).

One can recognise an SH3 domain in the interval 8-72; the sequence is HLGPKYVGLW…PHNYLAERET (65 aa). Tyr-13, Tyr-61, Tyr-66, and Tyr-114 each carry phosphotyrosine; by autocatalysis. Residues 78-170 form the SH2 domain; sequence WFFGCISRSE…SHGLRLAAPC (93 aa). Positions 171–190 are linker; it reads RKHEPEPLPHWDDWERPREE. Positions 191-445 constitute a Protein kinase domain; sequence FTLCRKLGSG…ALRERLSSFT (255 aa). Residues 197–205 and Lys-219 each bind ATP; that span reads LGSGYFGEV. Asp-312 serves as the catalytic Proton acceptor. Tyr-342 and Tyr-351 each carry phosphotyrosine; by autocatalysis. At Tyr-447 the chain carries Phosphotyrosine.

It belongs to the protein kinase superfamily. Tyr protein kinase family. BRK/PTK6/SIK subfamily. Interacts with GAP-A.p65. Interacts (via SH3 and SH2 domains) with KHDRBS1. Interacts (via SH3 and SH2 domains) with phosphorylated IRS4. Interacts with ADAM15. Interacts (via SH3 domain) with SFPQ. Interacts with EGFR and ERBB2. Interacts with STAP2. Interacts with PNX. Interacts with SFPQ. Interacts with PTK/ATK. Interacts with CTNNB1. Autophosphorylated. Autophosphorylation of Tyr-342 leads to an increase of kinase activity. Tyr-447 binds to the SH2 domain when phosphorylated and negatively regulates kinase activity. In terms of tissue distribution, epithelia-specific. Very high level in colon and high levels in small intestine and prostate, and low levels in some fetal tissues. Not expressed in breast or ovarian tissue but expressed in high percentage of breast and ovarian cancers. Also overexpressed in some metastatic melanomas, lymphomas, colon cancers, squamous cell carcinomas and prostate cancers. Also found in melanocytes. Not expressed in heart, brain, placenta, lung, liver, skeletal muscle, kidney and pancreas. Isoform 2 is present in prostate epithelial cell lines derived from normal prostate and prostate adenocarcinomas, as well as in a variety of cell lines.

It localises to the cytoplasm. It is found in the nucleus. The protein localises to the cell projection. Its subcellular location is the ruffle. The protein resides in the membrane. It carries out the reaction L-tyrosyl-[protein] + ATP = O-phospho-L-tyrosyl-[protein] + ADP + H(+). Activated by EGF, NRG1 and IGF1. Inhibited by SOCS3 to phosphorylate STAT3. Stabilized in the inactive form by an association between the SH3 domain and the SH2-TK linker region. Interaction between Trp-184 within SH2-TK linker region and the catalytic domain appears essential for positive regulation of kinase activity. Its function is as follows. Non-receptor tyrosine-protein kinase implicated in the regulation of a variety of signaling pathways that control the differentiation and maintenance of normal epithelia, as well as tumor growth. Function seems to be context dependent and differ depending on cell type, as well as its intracellular localization. A number of potential nuclear and cytoplasmic substrates have been identified. These include the RNA-binding proteins: KHDRBS1/SAM68, KHDRBS2/SLM1, KHDRBS3/SLM2 and SFPQ/PSF; transcription factors: STAT3 and STAT5A/B and a variety of signaling molecules: ARHGAP35/p190RhoGAP, PXN/paxillin, BTK/ATK, STAP2/BKS. Phosphorylates the GTPase-activating protein ARAP1 following EGF stimulation which enhances EGFR signaling by delaying EGFR down-regulation. Also associates with a variety of proteins that are likely upstream of PTK6 in various signaling pathways, or for which PTK6 may play an adapter-like role. These proteins include ADAM15, EGFR, ERBB2, ERBB3 and IRS4. In normal or non-tumorigenic tissues, PTK6 promotes cellular differentiation and apoptosis. In tumors PTK6 contributes to cancer progression by sensitizing cells to mitogenic signals and enhancing proliferation, anchorage-independent survival and migration/invasion. Association with EGFR, ERBB2, ERBB3 may contribute to mammary tumor development and growth through enhancement of EGF-induced signaling via BTK/AKT and PI3 kinase. Contributes to migration and proliferation by contributing to EGF-mediated phosphorylation of ARHGAP35/p190RhoGAP, which promotes association with RASA1/p120RasGAP, inactivating RhoA while activating RAS. EGF stimulation resulted in phosphorylation of PNX/Paxillin by PTK6 and activation of RAC1 via CRK/CrKII, thereby promoting migration and invasion. PTK6 activates STAT3 and STAT5B to promote proliferation. Nuclear PTK6 may be important for regulating growth in normal epithelia, while cytoplasmic PTK6 might activate oncogenic signaling pathways. Inhibits PTK6 phosphorylation and PTK6 association with other tyrosine-phosphorylated proteins. The polypeptide is Protein-tyrosine kinase 6 (PTK6) (Homo sapiens (Human)).